A 156-amino-acid chain; its full sequence is Small ribosomal subunit protein uS7 (156 aa).

This sequence belongs to the universal ribosomal protein uS7 family. Part of the 30S ribosomal subunit. Contacts proteins S9 and S11.

In terms of biological role, one of the primary rRNA binding proteins, it binds directly to 16S rRNA where it nucleates assembly of the head domain of the 30S subunit. Is located at the subunit interface close to the decoding center, probably blocks exit of the E-site tRNA. This is Small ribosomal subunit protein uS7 from Baumannia cicadellinicola subsp. Homalodisca coagulata.